The following is a 595-amino-acid chain: 3-hydroxy-3-methylglutaryl-coenzyme A reductase 2 (595 aa).

Residue Asn35 is glycosylated (N-linked (GlcNAc...) asparagine). The next 2 membrane-spanning stretches (helical) occupy residues 48-68 and 92-112; these read LPLY…MYFL and AIVS…IGFV. The interval 113 to 183 is linker; sequence QTFVSRGNND…SPLITPASSE (71 aa). An N-linked (GlcNAc...) asparagine glycan is attached at Asn121. Residues 184–595 form a catalytic region; the sequence is EDEEIINSVV…KYNRSTKASS (412 aa). Glu278 (charge relay system) is an active-site residue. Residue Asn342 is glycosylated (N-linked (GlcNAc...) asparagine). The active-site Charge relay system is Lys410. Asn455 is a glycosylation site (N-linked (GlcNAc...) asparagine). The Charge relay system role is filled by Asp486. Catalysis depends on His584, which acts as the Proton donor. Asn588 is a glycosylation site (N-linked (GlcNAc...) asparagine).

This sequence belongs to the HMG-CoA reductase family. In terms of tissue distribution, expressed in young flowers and in mature sepals and ovaries.

It localises to the endoplasmic reticulum membrane. It catalyses the reaction (R)-mevalonate + 2 NADP(+) + CoA = (3S)-3-hydroxy-3-methylglutaryl-CoA + 2 NADPH + 2 H(+). The protein operates within metabolic intermediate biosynthesis; (R)-mevalonate biosynthesis; (R)-mevalonate from acetyl-CoA: step 3/3. In terms of biological role, catalyzes the synthesis of mevalonate. The specific precursor of all isoprenoid compounds present in plants. This chain is 3-hydroxy-3-methylglutaryl-coenzyme A reductase 2 (HMG2), found in Solanum tuberosum (Potato).